Consider the following 205-residue polypeptide: dTTP/UTP pyrophosphatase (205 aa).

Aspartate 81 functions as the Proton acceptor in the catalytic mechanism.

Belongs to the Maf family. YhdE subfamily. Requires a divalent metal cation as cofactor.

It localises to the cytoplasm. The catalysed reaction is dTTP + H2O = dTMP + diphosphate + H(+). It carries out the reaction UTP + H2O = UMP + diphosphate + H(+). Functionally, nucleoside triphosphate pyrophosphatase that hydrolyzes dTTP and UTP. May have a dual role in cell division arrest and in preventing the incorporation of modified nucleotides into cellular nucleic acids. This Agathobacter rectalis (strain ATCC 33656 / DSM 3377 / JCM 17463 / KCTC 5835 / VPI 0990) (Eubacterium rectale) protein is dTTP/UTP pyrophosphatase.